The following is a 1199-amino-acid chain: Chromatin structure-remodeling complex subunit snf21 (1199 aa).

In terms of domain architecture, HSA spans 256 to 328; the sequence is QRSDRERRLK…AKQRLQALKE (73 aa). Positions 429-594 constitute a Helicase ATP-binding domain; it reads ISLYNNHLNG…WALLNFVLPR (166 aa). Residue 442–449 coordinates ATP; the sequence is DEMGLGKT. The short motif at 544–547 is the DEGH box element; sequence DEGH. One can recognise a Helicase C-terminal domain in the interval 740–903; that stretch reads LLDRILPKLF…STPEEREAFL (164 aa). The interval 1017–1059 is disordered; it reads MESEARPTRGRPKRNIASVDETPALTLNGKPKKKRGPAPDTLT. Residues 1061-1171 enclose the Bromo domain; that stretch reads EHRSLLRRVC…TAMETKIEEL (111 aa).

This sequence belongs to the SNF2/RAD54 helicase family. In terms of assembly, component of the RSC complex composed of at least arp9, arp42, rsc1, rsc4, rsc7, rsc9, rsc58, sfh1, snf21, ssr1, ssr2, ssr3 and ssr4. The complex interacts with histone and histone variant components of centromeric chromatin.

Its subcellular location is the nucleus. Functionally, helicase. Component of the chromatin structure remodeling complex (RSC), which is involved in transcription regulation and nucleosome positioning. Controls particularly membrane and organelle development genes. The sequence is that of Chromatin structure-remodeling complex subunit snf21 (snf21) from Schizosaccharomyces pombe (strain 972 / ATCC 24843) (Fission yeast).